Consider the following 610-residue polypeptide: ABC transporter ATP-binding protein ARB1 (610 aa).

The interval 1–43 is disordered; it reads MPPVSASKAKRDAKKAEREAKKAAAGKTIRKLGRKKEAAAEES. Phosphoserine occurs at positions 43 and 65. ABC transporter domains follow at residues 82–323 and 393–610; these read IKLS…TNQM and LAFD…NVVL. An ATP-binding site is contributed by 114 to 121; sequence GENGCGKS. Ser-196 is modified (phosphoserine). 428–435 is an ATP binding site; that stretch reads GPNGVGKS. Residue Thr-446 is modified to Phosphothreonine.

It belongs to the ABC transporter superfamily. ABCF family. EF3 subfamily. Interacts with LSG1.

Its subcellular location is the cytoplasm. It is found in the nucleus. The enzyme catalyses ATP + H2O = ADP + phosphate + H(+). Its function is as follows. ATPase that stimulates 40S and 60S ribosome biogenesis. Also involved in ribosome-associated quality control (RQC) pathway, a pathway that mediates ubiquitination and extraction of incompletely synthesized nascent chains for proteasomal degradation: localizes to the ribosomal E-site and stimulates VMS1-dependent tRNA cleavage. The sequence is that of ABC transporter ATP-binding protein ARB1 (ARB1) from Saccharomyces cerevisiae (strain ATCC 204508 / S288c) (Baker's yeast).